The chain runs to 279 residues: MDTELLKTFLEVSRTRHFGRAAESLYLTQSAVSFRIRQLENQLGVNLFTRHRNNIRLTAAGEKLLPYAETLMSTWQAARKEVAHTSRHNEFSIGASASLWECMLNQWLGRLYQNQDTHTGLQFEARIAQRQSLVKQLHERQLDLLITTEAPKMDEFSSQLLGYFTLALYTSAPSKLKGDLNYLRLEWGPDFQQHEAGLIGTDEVPILTTSSAELAQQQIAMLNGCTWLPVSWARKKGGLHTVVDSTTLSRPLYAIWLQNSDKHALIRDLLKINVLDEVY.

The region spanning 1–58 (MDTELLKTFLEVSRTRHFGRAAESLYLTQSAVSFRIRQLENQLGVNLFTRHRNNIRLT) is the HTH lysR-type domain. The segment at residues 18-37 (FGRAAESLYLTQSAVSFRIR) is a DNA-binding region (H-T-H motif).

This sequence belongs to the LysR transcriptional regulatory family.

Its function is as follows. Negatively regulates the transcription of the flagellar master operon flhDC by binding to the upstream region of the operon. This is HTH-type transcriptional regulator HdfR from Escherichia fergusonii (strain ATCC 35469 / DSM 13698 / CCUG 18766 / IAM 14443 / JCM 21226 / LMG 7866 / NBRC 102419 / NCTC 12128 / CDC 0568-73).